We begin with the raw amino-acid sequence, 553 residues long: Glucose-6-phosphate isomerase (553 aa).

Glu357 serves as the catalytic Proton donor. Residues His388 and Lys514 contribute to the active site. A disordered region spans residues 527–553; the sequence is ADSPAAQSDSSTDALVRRYRTERGRTA. The span at 541–553 shows a compositional bias: basic and acidic residues; that stretch reads LVRRYRTERGRTA.

It belongs to the GPI family.

It is found in the cytoplasm. The catalysed reaction is alpha-D-glucose 6-phosphate = beta-D-fructose 6-phosphate. It functions in the pathway carbohydrate biosynthesis; gluconeogenesis. The protein operates within carbohydrate degradation; glycolysis; D-glyceraldehyde 3-phosphate and glycerone phosphate from D-glucose: step 2/4. Functionally, catalyzes the reversible isomerization of glucose-6-phosphate to fructose-6-phosphate. This chain is Glucose-6-phosphate isomerase, found in Mycolicibacterium vanbaalenii (strain DSM 7251 / JCM 13017 / BCRC 16820 / KCTC 9966 / NRRL B-24157 / PYR-1) (Mycobacterium vanbaalenii).